The chain runs to 221 residues: MALQLKHITKTFGNGDAQTEVLKNINFSVNQGEFIILSGASGSGKSTLLNILGGLLSPSSGDVLYKGENLFSKEVDKTSLRLNDIGFIFQSSHLVPYLTVREQLMIVAKEAGIKRKEAKDKAQRLLNEIGLSHRLDVYPHLLSGGEKQRVAIMRAFMNEPKIILADEPTASLDADRATSVVQMIKAHVQTKNMIGIMITHDKRLFEYADRVIEIQDGKIEL.

The ABC transporter domain maps to 3 to 221; that stretch reads LQLKHITKTF…IEIQDGKIEL (219 aa). Position 39 to 46 (39 to 46) interacts with ATP; that stretch reads GASGSGKS.

The protein belongs to the ABC transporter superfamily. HrtA family. As to quaternary structure, the complex is composed of two ATP-binding proteins (HrtA), two transmembrane proteins (HrtB) and a solute-binding protein.

The protein resides in the cell membrane. Part of the ABC transporter complex hrt involved in hemin import. Responsible for energy coupling to the transport system. The sequence is that of Putative hemin import ATP-binding protein HrtA (hrtA) from Staphylococcus haemolyticus (strain JCSC1435).